A 310-amino-acid polypeptide reads, in one-letter code: Probable manganese-dependent inorganic pyrophosphatase (310 aa).

Mn(2+) contacts are provided by H9, D13, D15, D75, H97, and D149.

Belongs to the PPase class C family. Mn(2+) is required as a cofactor.

It localises to the cytoplasm. It carries out the reaction diphosphate + H2O = 2 phosphate + H(+). This Bacillus cytotoxicus (strain DSM 22905 / CIP 110041 / 391-98 / NVH 391-98) protein is Probable manganese-dependent inorganic pyrophosphatase.